The primary structure comprises 378 residues: Actin-related protein 2/3 complex subunit 1B (378 aa).

WD repeat units follow at residues 8-47 (RFAE…HWER), 53-92 (KHDQ…WVPT), 97-138 (RLNR…WVSK), 143-182 (RHES…VDTK), 203-242 (LSYS…PLAQ), 257-295 (ISEK…KAAS), and 331-375 (VHDN…QELG). The interval 319–340 (TTANDASDSRGGVHDNSITSIV) is disordered.

The protein belongs to the WD repeat ARPC1 family. In terms of assembly, component of the Arp2/3 complex composed of ARP2, ARP3, ARPC1/p41-ARC, ARPC2/p34-ARC, ARPC3/p21-ARC, ARPC4/p20-ARC and ARPC5/p16-ARC. As to expression, expressed at low levels in all tissues with a relatively highest expression in inflorescences.

The protein localises to the cytoplasm. Its subcellular location is the cytoskeleton. Functions as a component of the Arp2/3 complex which is involved in regulation of actin polymerization and together with an activating nucleation-promoting factor (NPF) mediates the formation of branched actin networks. Arp2/3 complex plays a critical role in the control of cell morphogenesis via the modulation of cell polarity development. The sequence is that of Actin-related protein 2/3 complex subunit 1B (ARPC1B) from Arabidopsis thaliana (Mouse-ear cress).